The sequence spans 147 residues: UPF0735 ACT domain-containing protein ABC1543 (147 aa).

The region spanning 70 to 145 (TFSINLADRS…SVERVELVGS (76 aa)) is the ACT domain.

The protein belongs to the UPF0735 family.

This Shouchella clausii (strain KSM-K16) (Alkalihalobacillus clausii) protein is UPF0735 ACT domain-containing protein ABC1543.